The sequence spans 94 residues: Protein translocase subunit SecE (94 aa).

A disordered region spans residues Met-1–Lys-32. The span at Lys-22–Lys-32 shows a compositional bias: basic residues. A helical membrane pass occupies residues Gln-59–Ile-81.

This sequence belongs to the SecE/SEC61-gamma family. As to quaternary structure, component of the Sec protein translocase complex. Heterotrimer consisting of SecY, SecE and SecG subunits. The heterotrimers can form oligomers, although 1 heterotrimer is thought to be able to translocate proteins. Interacts with the ribosome. Interacts with SecDF, and other proteins may be involved. Interacts with SecA.

It localises to the cell membrane. Essential subunit of the Sec protein translocation channel SecYEG. Clamps together the 2 halves of SecY. May contact the channel plug during translocation. The chain is Protein translocase subunit SecE from Streptomyces galbus.